A 1006-amino-acid chain; its full sequence is Zinc finger protein ZFPM1 (1006 aa).

Residues 1–13 (MSRRKQSNPRQIK) are compositionally biased toward basic residues. 2 disordered regions span residues 1–93 (MSRR…DELE) and 114–133 (SWGPFHGSVQTRASSPRQAE). Residues 15 to 25 (SLGDMEAREEV) show a composition bias toward basic and acidic residues. Residues 42–62 (APSPPSADVNSPPPLPPPTSP) show a composition bias toward pro residues. A compositionally biased stretch (basic and acidic residues) spans 66 to 79 (KELEGQEPEPRPTE). A phosphoserine mark is found at S84 and S128. Over residues 121–130 (SVQTRASSPR) the composition is skewed to polar residues. The segment at 235 to 268 (VINKDVFPCKDCGIWYRSERNLQAHLLYYCASRQ) adopts a CCHC FOG-type 1 zinc-finger fold. Zn(2+)-binding residues include C243, C246, H259, and C264. S272 carries the post-translational modification Phosphoserine. 3 C2H2-type zinc fingers span residues 290–314 (RVCPFPQCRKSCPSASSLEIHMRSH), 320–342 (FVCLICLSAFTTKANCERHLKVH), and 348–371 (GVCHSCGFISTTRDILYSHLVTNH). The tract at residues 330–341 (TTKANCERHLKV) is interaction with TACC3. A Phosphoserine modification is found at S384. 3 disordered regions span residues 384 to 409 (SPGAGHPATKLPPDSLGSFQQQHTAL), 438 to 460 (NGEARAEPLAQNGGSSEPPAAPR), and 473 to 515 (APIL…SPVP). The segment covering 485–515 (APSRTPSPRSPAPARVKAELSSPTPGSSPVP) has biased composition (low complexity). 2 positions are modified to phosphoserine: S491 and S494. The CCHC FOG-type 2 zinc finger occupies 571 to 604 (PGAPKGATCFECEITFSNVNNYYVHKRLYCSGRR). Positions 579, 582, 595, and 600 each coordinate Zn(2+). Positions 605–681 (APEDAPAARR…SVDDAEDDPS (77 aa)) are disordered. Residues 617 to 629 (APPGPARAPPGQP) show a composition bias toward pro residues. Phosphoserine is present on residues S638 and S671. The CCHC FOG-type 3 zinc finger occupies 677 to 710 (EDDPSRTLCEACNIRFSRHETYTVHKRYYCASRH). Residues C685, C688, H701, and C706 each coordinate Zn(2+). The interval 708–810 (SRHDPPPRRP…PRRPLPGAPA (103 aa)) is disordered. Composition is skewed to pro residues over residues 715-735 (RRPAAPPGPPGPAAPPAPSPA) and 754-769 (APPPPPPGHAPAPESP). Residues 780–791 (GLAPARSPGPAA) show a composition bias toward low complexity. S786 carries the post-translational modification Phosphoserine. Residues 794 to 800 (PIDLSKK) form an interaction with CTBP2 region. A CCHC FOG-type 4 zinc finger spans residues 811–844 (PALADYHECTACRVSFHSLEAYLAHKKYSCPAAP). Residues C819, C822, H835, and C840 each coordinate Zn(2+). The C2H2-type 4 zinc-finger motif lies at 854-877 (AACPYCPPNGPVRGDLLEHFRLAH). Residues 889–971 (GVEARTPADR…KGTPAPLPNG (83 aa)) are disordered. A phosphoserine mark is found at S901, S909, S914, and S935. Residues 925–950 (PQEPPPGPPPSPAAAPEAVPPPPAPP) show a composition bias toward pro residues. The CCHC FOG-type 5 zinc-finger motif lies at 968–1001 (LPNGNHRYCRLCNIKFSSLSTFIAHKKYYCSSHA). Residues C976, C979, H992, and C997 each coordinate Zn(2+).

Belongs to the FOG (Friend of GATA) family. Interacts with corepressor CTBP2; this interaction is however not essential for corepressor activity. Interacts with the N-terminal zinc-finger of GATA1, GATA2 and probably GATA3. Mainly expressed in hematopoietic tissues. Also expressed in adult cerebellum, stomach, lymph node, liver and pancreas. Expressed in fetal heart, liver and spleen.

Its subcellular location is the nucleus. Transcription regulator that plays an essential role in erythroid and megakaryocytic cell differentiation. Essential cofactor that acts via the formation of a heterodimer with transcription factors of the GATA family GATA1, GATA2 and GATA3. Such heterodimer can both activate or repress transcriptional activity, depending on the cell and promoter context. The heterodimer formed with GATA proteins is essential to activate expression of genes such as NFE2, ITGA2B, alpha- and beta-globin, while it represses expression of KLF1. May be involved in regulation of some genes in gonads. May also be involved in cardiac development, in a non-redundant way with ZFPM2/FOG2. The protein is Zinc finger protein ZFPM1 (ZFPM1) of Homo sapiens (Human).